The following is a 670-amino-acid chain: Zinc finger and BTB domain-containing protein 5 (670 aa).

One can recognise a BTB domain in the interval 24 to 93 (CDCVIVVGNR…MYTSTLMLGE (70 aa)). 2 disordered regions span residues 158–256 (LSSS…QEDG) and 268–382 (EDAQ…SSTD). Polar residues predominate over residues 170–181 (PMSSSMRSSLDQ). Ser-234 is subject to Phosphoserine. A Glycyl lysine isopeptide (Lys-Gly) (interchain with G-Cter in SUMO2) cross-link involves residue Lys-239. Over residues 285–295 (SRATQVETSFE) the composition is skewed to polar residues. Residues Lys-317 and Lys-325 each participate in a glycyl lysine isopeptide (Lys-Gly) (interchain with G-Cter in SUMO2) cross-link. Residues 345-360 (AEGSESVEVEGVVVSA) are compositionally biased toward low complexity. Basic and acidic residues predominate over residues 361 to 374 (EKIDLSPESSDRSF). Ser-366 carries the post-translational modification Phosphoserine. Glycyl lysine isopeptide (Lys-Gly) (interchain with G-Cter in SUMO2) cross-links involve residues Lys-399 and Lys-410. The span at 414–432 (SNFSASQSTDDNLPNTTSD) shows a compositional bias: polar residues. Disordered stretches follow at residues 414 to 433 (SNFSASQSTDDNLPNTTSDC) and 442 to 470 (LLSPEAGPAGGPSSAPGSHVENPFSEPAD). A compositionally biased stretch (low complexity) spans 444–459 (SPEAGPAGGPSSAPGS). Residues Lys-535, Lys-587, and Lys-590 each participate in a glycyl lysine isopeptide (Lys-Gly) (interchain with G-Cter in SUMO2) cross-link. The C2H2-type 1 zinc finger occupies 606–628 (YACKICCKTFLTLTDCKKHIRVH). The C2H2-type 2; atypical zinc-finger motif lies at 634–657 (YACLKCGKRFSQSSHLYKHSKTTC). Residues Lys-638 and Lys-651 each participate in a glycyl lysine isopeptide (Lys-Gly) (interchain with G-Cter in SUMO2) cross-link.

It localises to the nucleus. Its function is as follows. May be involved in transcriptional regulation. The polypeptide is Zinc finger and BTB domain-containing protein 5 (Zbtb5) (Mus musculus (Mouse)).